A 133-amino-acid polypeptide reads, in one-letter code: Large-conductance mechanosensitive channel (133 aa).

Helical transmembrane passes span 10–30 (FAMK…TAFG) and 76–96 (GNFI…FCVI).

Belongs to the MscL family. Homopentamer.

It is found in the cell inner membrane. Functionally, channel that opens in response to stretch forces in the membrane lipid bilayer. May participate in the regulation of osmotic pressure changes within the cell. In Campylobacter curvus (strain 525.92), this protein is Large-conductance mechanosensitive channel.